The chain runs to 185 residues: Large ribosomal subunit protein uL5 (185 aa).

Belongs to the universal ribosomal protein uL5 family. Part of the 50S ribosomal subunit; part of the 5S rRNA/L5/L18/L25 subcomplex. Contacts the 5S rRNA and the P site tRNA. Forms a bridge to the 30S subunit in the 70S ribosome.

Functionally, this is one of the proteins that bind and probably mediate the attachment of the 5S RNA into the large ribosomal subunit, where it forms part of the central protuberance. In the 70S ribosome it contacts protein S13 of the 30S subunit (bridge B1b), connecting the 2 subunits; this bridge is implicated in subunit movement. Contacts the P site tRNA; the 5S rRNA and some of its associated proteins might help stabilize positioning of ribosome-bound tRNAs. In Rhodopseudomonas palustris (strain BisB5), this protein is Large ribosomal subunit protein uL5.